The chain runs to 153 residues: Aspartate carbamoyltransferase regulatory chain (153 aa).

Cysteine 109, cysteine 114, cysteine 138, and cysteine 141 together coordinate Zn(2+).

It belongs to the PyrI family. As to quaternary structure, contains catalytic and regulatory chains. The cofactor is Zn(2+).

Its function is as follows. Involved in allosteric regulation of aspartate carbamoyltransferase. The chain is Aspartate carbamoyltransferase regulatory chain from Escherichia coli O7:K1 (strain IAI39 / ExPEC).